We begin with the raw amino-acid sequence, 99 residues long: Malonate decarboxylase acyl carrier protein (99 aa).

Serine 25 is modified (O-(phosphoribosyl dephospho-coenzyme A)serine).

The protein belongs to the MdcC family. Covalently binds the prosthetic group of malonate decarboxylase.

It localises to the cytoplasm. In terms of biological role, subunit of malonate decarboxylase, it is an acyl carrier protein to which acetyl and malonyl thioester residues are bound via a 2'-(5''-phosphoribosyl)-3'-dephospho-CoA prosthetic group and turn over during the catalytic mechanism. In Pseudomonas putida (strain W619), this protein is Malonate decarboxylase acyl carrier protein.